The primary structure comprises 1196 residues: Homeodomain-interacting protein kinase 2 (1196 aa).

Phosphoserine is present on Ser-16. A Glycyl lysine isopeptide (Lys-Gly) (interchain with G-Cter in SUMO); alternate cross-link involves residue Lys-32. Residue Lys-32 forms a Glycyl lysine isopeptide (Lys-Gly) (interchain with G-Cter in SUMO2); alternate linkage. Residues 50-69 (VYSQSKNIPPSQPASTTVST) are disordered. Residues 97–230 (SASSTSVTGQ…TNEIVAIKIL (134 aa)) form a transcriptional corepression region. Residues Ser-118 and Ser-135 each carry the phosphoserine modification. Position 141 is a phosphothreonine (Thr-141). Residues 189-520 (HEVLCSMTNT…DADKRVTPIE (332 aa)) form an interaction with DAXX region. A Protein kinase domain is found at 199-527 (YEVLEFLGRG…PIETLNHPFV (329 aa)). ATP-binding positions include 205-213 (LGRGTFGQV) and Lys-228. 2 positions are modified to phosphothreonine: Thr-252 and Thr-273. The active-site Proton acceptor is Asp-324. Tyr-361 is subject to Phosphotyrosine; by autocatalysis. Phosphoserine is present on Ser-441. Residues Thr-482, Thr-517, and Thr-566 each carry the phosphothreonine modification. Residues 539-844 (AHVKSCFQNM…KENTPPRCAM (306 aa)) form an interaction with SKI and SMAD1 region. The interaction with DAZAP2 stretch occupies residues 600-800 (SATLSLANPE…MRQQPTSTTS (201 aa)). Phosphoserine is present on residues Ser-634 and Ser-668. At Thr-687 the chain carries Phosphothreonine. The interval 752–897 (RNTHAHGSHY…ITISSDTDEE (146 aa)) is interaction with POU4F1. Positions 774 to 876 (HVTLPAAQPL…TRERQRQTIV (103 aa)) are interaction with CTBP1. The interaction with HMGA1 stretch occupies residues 787–897 (VAHVMRQQPT…ITISSDTDEE (111 aa)). Disordered stretches follow at residues 792–847 (RQQP…MVHS) and 891–963 (SSDT…CTGN). Positions 793 to 829 (QQPTSTTSSRKSKQHQSSVRNVSTCEVTSSQAISSPQ) are enriched in polar residues. The Nuclear localization signal 1 (NLS1) motif lies at 802 to 805 (RKSK). Phosphoserine occurs at positions 815 and 827. Positions 832 to 835 (KRVK) match the Nuclear localization signal 2 (NLS2) motif. The tract at residues 839-934 (PPRCAMVHSS…PYSDSSSNTS (96 aa)) is interaction with TP53 and TP73. Residues 873 to 907 (QTIVIPDTPSPTVSVITISSDTDEEEEQKHAPTST) are interaction with UBE2I. A localization to nuclear speckles region spans residues 873–980 (QTIVIPDTPS…PLKTQASEVL (108 aa)). Positions 873–980 (QTIVIPDTPS…PLKTQASEVL (108 aa)) are required for localization to nuclear speckles. The tract at residues 884–908 (TVSVITISSDTDEEEEQKHAPTSTV) is SUMO interaction motifs (SIM); required for nuclear localization and kinase activity. Low complexity predominate over residues 923–937 (DSPYSDSSSNTSPYS). A Phosphoserine modification is found at Ser-934. The interval 935–1050 (PYSVQQRTGH…LSQAQQHMAA (116 aa)) is interaction with AXIN1. Positions 938–951 (VQQRTGHNGTNTLD) are enriched in polar residues. Glycyl lysine isopeptide (Lys-Gly) (interchain with G-Cter in SUMO2) cross-links involve residues Lys-953 and Lys-973. The autoinhibitory domain (AID) stretch occupies residues 984–1196 (DSLGPAISAS…PAKVNQYPYI (213 aa)). Residues Ser-991, Ser-993, Ser-1042, Ser-1153, and Ser-1186 each carry the phosphoserine modification. A compositionally biased stretch (low complexity) spans 991 to 1046 (SASHHSSSFKSKSSSTVTSTSGHSSGSSSGAIAYRQQRPGPHFQQQQPLNLSQAQQ). Residues 991-1058 (SASHHSSSFK…AADRTGSHRR (68 aa)) are disordered. Lys-1189 is covalently cross-linked (Glycyl lysine isopeptide (Lys-Gly) (interchain with G-Cter in SUMO)).

Belongs to the protein kinase superfamily. CMGC Ser/Thr protein kinase family. HIPK subfamily. In terms of assembly, interacts with CREB1, SIAH1, WSB1, CBX4, TRADD, p53/TP53, TP73, TP63, CREBBP, DAXX, P53DINP1, SKI, SMAD1, SMAD2 and SMAD3, but not SMAD4. Interacts with SP100; positively regulates TP53-dependent transcription. Interacts with ATF1, PML, RUNX1, EP300, NKX1-2, NKX2-5, UBE2I, HMGA1, CTBP1, AXIN1, NLK, MYB, POU4F1, POU4F2, POU4F3, UBE2I, UBL1 and ZBTB4. Probably part of a complex consisting of p53/TP53, HIPK2 and AXIN1. Interacts with DAZAP2; the interaction results in phosphorylation of DAZAP2 which causes localization of DAZAP2 to the nucleus, reduces interaction of DAZAP2 with HIPK2 and prevents DAZAP2-dependent degradation of HIPK2. Interacts with SIAH1; the interaction is promoted by DAZAP2 and results in SIAH1-mediated ubiquitination and subsequent proteasomal degradation of HIPK2. As to quaternary structure, interacts with SPN/CD43 cytoplasmic tail. In terms of processing, sumoylated. When conjugated it is directed to nuclear speckles. Desumoylated by SENP1. Sumoylation on Lys-32 is promoted by the E3 SUMO-protein ligase CBX4. Autophosphorylation at Tyr-361 in the activation loop activates the kinase and promotes nuclear localization. Post-translationally, ubiquitinated by FBXO3, WSB1 and SIAH1, leading to rapid proteasome-dependent degradation. The degradation mediated by FBXO3, but not ubiquitination, is prevented in the presence of PML. The degradation mediated by WSB1 and SIAH1 is reversibly reduced upon DNA damage. In terms of processing, cleaved at Asp-923 and Asp-984 by CASP6 in a p53/TP53-dependent manner. The cleaved form lacks the autoinhibitory C-terminal domain (AID), resulting in a hyperactive kinase, which potentiates p53/TP53 Ser-46 phosphorylation and subsequent activation of the cell death machinery. Ubiquitous. Abundant in muscle, heart, small intestine, stomach, kidney and brain; and low in testis, skin and lung.

Its subcellular location is the nucleus. It is found in the PML body. The protein resides in the cytoplasm. It catalyses the reaction L-seryl-[protein] + ATP = O-phospho-L-seryl-[protein] + ADP + H(+). The enzyme catalyses L-threonyl-[protein] + ATP = O-phospho-L-threonyl-[protein] + ADP + H(+). In terms of biological role, serine/threonine-protein kinase involved in transcription regulation, p53/TP53-mediated cellular apoptosis and regulation of the cell cycle. Acts as a corepressor of several transcription factors, including SMAD1 and POU4F1/Brn3a and probably NK homeodomain transcription factors. Phosphorylates PDX1, ATF1, PML, p53/TP53, CREB1, CTBP1, CBX4, RUNX1, EP300, CTNNB1, HMGA1, ZBTB4 and DAZAP2. Inhibits cell growth and promotes apoptosis through the activation of p53/TP53 both at the transcription level and at the protein level (by phosphorylation and indirect acetylation). The phosphorylation of p53/TP53 may be mediated by a p53/TP53-HIPK2-AXIN1 complex. Involved in the response to hypoxia by acting as a transcriptional co-suppressor of HIF1A. Mediates transcriptional activation of TP73. In response to TGFB, cooperates with DAXX to activate JNK. Negative regulator through phosphorylation and subsequent proteasomal degradation of CTNNB1 and the antiapoptotic factor CTBP1. In the Wnt/beta-catenin signaling pathway acts as an intermediate kinase between MAP3K7/TAK1 and NLK to promote the proteasomal degradation of MYB. Phosphorylates CBX4 upon DNA damage and promotes its E3 SUMO-protein ligase activity. Activates CREB1 and ATF1 transcription factors by phosphorylation in response to genotoxic stress. In response to DNA damage, stabilizes PML by phosphorylation. PML, HIPK2 and FBXO3 may act synergically to activate p53/TP53-dependent transactivation. Promotes angiogenesis, and is involved in erythroid differentiation, especially during fetal liver erythropoiesis. Phosphorylation of RUNX1 and EP300 stimulates EP300 transcription regulation activity. Triggers ZBTB4 protein degradation in response to DNA damage. In response to DNA damage, phosphorylates DAZAP2 which localizes DAZAP2 to the nucleus, reduces interaction of DAZAP2 with HIPK2 and prevents DAZAP2-dependent ubiquitination of HIPK2 by E3 ubiquitin-protein ligase SIAH1 and subsequent proteasomal degradation. Modulates HMGA1 DNA-binding affinity. In response to high glucose, triggers phosphorylation-mediated subnuclear localization shifting of PDX1. Involved in the regulation of eye size, lens formation and retinal lamination during late embryogenesis. The sequence is that of Homeodomain-interacting protein kinase 2 (Hipk2) from Mus musculus (Mouse).